An 89-amino-acid chain; its full sequence is Large ribosomal subunit protein bL27 (89 aa).

A disordered region spans residues 1–21 (MAHKKAGGSSRNGRDSESKRL).

Belongs to the bacterial ribosomal protein bL27 family.

The protein is Large ribosomal subunit protein bL27 of Brucella anthropi (strain ATCC 49188 / DSM 6882 / CCUG 24695 / JCM 21032 / LMG 3331 / NBRC 15819 / NCTC 12168 / Alc 37) (Ochrobactrum anthropi).